Here is a 491-residue protein sequence, read N- to C-terminus: AAA-ATPase At2g46620 (491 aa).

A helical transmembrane segment spans residues 1 to 21 (MGILWDSFLLLLVSTFALFLV). Residue 238 to 245 (GPSGTGKS) participates in ATP binding. Residues 423–460 (GTGRRLLLENGSRKSTSEDVSDDMSGSLCGGGGGSSPA) form a disordered region.

The protein belongs to the AAA ATPase family. BCS1 subfamily. Mg(2+) is required as a cofactor.

It localises to the membrane. The catalysed reaction is ATP + H2O = ADP + phosphate + H(+). This Arabidopsis thaliana (Mouse-ear cress) protein is AAA-ATPase At2g46620.